The primary structure comprises 149 residues: Large ribosomal subunit protein uL30 (149 aa).

Belongs to the universal ribosomal protein uL30 family. Part of the 50S ribosomal subunit.

This Methanopyrus kandleri (strain AV19 / DSM 6324 / JCM 9639 / NBRC 100938) protein is Large ribosomal subunit protein uL30.